Here is a 415-residue protein sequence, read N- to C-terminus: Imidazolonepropionase (415 aa).

Fe(3+) is bound by residues H80 and H82. Zn(2+)-binding residues include H80 and H82. Residues R89, Y152, and H185 each contribute to the 4-imidazolone-5-propanoate site. Y152 contributes to the N-formimidoyl-L-glutamate binding site. H250 contributes to the Fe(3+) binding site. Residue H250 coordinates Zn(2+). Q253 is a 4-imidazolone-5-propanoate binding site. D325 contacts Fe(3+). D325 contributes to the Zn(2+) binding site. N-formimidoyl-L-glutamate contacts are provided by N327 and G329. A 4-imidazolone-5-propanoate-binding site is contributed by T330.

This sequence belongs to the metallo-dependent hydrolases superfamily. HutI family. Zn(2+) serves as cofactor. The cofactor is Fe(3+).

The protein resides in the cytoplasm. The enzyme catalyses 4-imidazolone-5-propanoate + H2O = N-formimidoyl-L-glutamate. Its pathway is amino-acid degradation; L-histidine degradation into L-glutamate; N-formimidoyl-L-glutamate from L-histidine: step 3/3. In terms of biological role, catalyzes the hydrolytic cleavage of the carbon-nitrogen bond in imidazolone-5-propanoate to yield N-formimidoyl-L-glutamate. It is the third step in the universal histidine degradation pathway. The sequence is that of Imidazolonepropionase from Rhizobium meliloti (strain 1021) (Ensifer meliloti).